Consider the following 392-residue polypeptide: 26S proteasome regulatory subunit 8 homolog (392 aa).

176–183 provides a ligand contact to ATP; the sequence is GPPGTGKT.

The protein belongs to the AAA ATPase family. In terms of assembly, the 26S proteasome consists of a 20S proteasome core and two 19S regulatory subunits. The 20S proteasome core is composed of 28 subunits that are arranged in four stacked rings, resulting in a barrel-shaped structure. The two end rings are each formed by seven alpha subunits, and the two central rings are each formed by seven beta subunits. The catalytic chamber with the active sites is on the inside of the barrel.

It is found in the cytoplasm. The protein localises to the nucleus. Its function is as follows. Acts as a regulatory subunit of the 26S proteasome which degrades poly-ubiquitinated proteins in the cytoplasm and in the nucleus. It is essential for the regulated turnover of proteins and for the removal of misfolded proteins. The proteasome is a multicatalytic proteinase complex that is characterized by its ability to cleave peptides with Arg, Phe, Tyr, Leu, and Glu adjacent to the leaving group at neutral or slightly basic pH. In Encephalitozoon cuniculi (strain GB-M1) (Microsporidian parasite), this protein is 26S proteasome regulatory subunit 8 homolog (RPT6).